The sequence spans 287 residues: Festuclavine synthase II (287 aa).

The protein belongs to the fgaFS/easG family.

The catalysed reaction is festuclavine + NAD(+) = 6,8-dimethyl-6,7-didehydroergoline + NADH + H(+). It participates in alkaloid biosynthesis; ergot alkaloid biosynthesis. Festuclavine synthase; part of the gene cluster that mediates the biosynthesis of isofumigaclavines, fungal ergot alkaloids. The tryptophan dimethylallyltransferase ifgA catalyzes the first step of ergot alkaloid biosynthesis by condensing dimethylallyl diphosphate (DMAP) and tryptophan to form 4-dimethylallyl-L-tryptophan. The second step is catalyzed by the methyltransferase ifgB that methylates 4-dimethylallyl-L-tryptophan in the presence of S-adenosyl-L-methionine, resulting in the formation of N-methyl-dimethylallyl-L-tryptophan. The catalase ifgD and the FAD-dependent oxidoreductase ifgC then transform N-methyl-dimethylallyl-L-tryptophan to chanoclavine-I which is further oxidized by ifgE in the presence of NAD(+), resulting in the formation of chanoclavine-I aldehyde. The chanoclavine-I aldehyde reductases ifgG and/or fgaOx3 reduce chanoclavine-I aldehyde to dihydrochanoclavine-I aldehyde that spontaneously dehydrates to form 6,8-dimethyl-6,7-didehydroergoline. The festuclavine dehydrogenases ifgF1 and/or ifgF2 then catalyze the reduction of 6,8-dimethyl-6,7-didehydroergoline to form festuclavine. Hydrolysis of festuclavine by a yet undetermined cytochrome P450 monooxygenase (called ifgH) then leads to the formation of isofumigaclavine B which is in turn acetylated by ifgI to isofumigaclavine A. Penicillium roqueforti has interestingly at least two sets of genes for the consumption of chanoclavine-I aldehyde on three different loci, the OYEs ifgG/fgaOx3 and the festuclavine synthase homologs ifgF1/ifgF2. The reason for the duplication of these genes is unclear, probably to ensure the conversion of chanoclavine-I aldehyde by differential gene expression under various environmental conditions. This chain is Festuclavine synthase II, found in Penicillium roqueforti (strain FM164).